A 298-amino-acid chain; its full sequence is N-acetylmuramic acid 6-phosphate etherase (298 aa).

Residues 55–218 (IHAQVSGGGR…STGLMIKSGK (164 aa)) enclose the SIS domain. E83 functions as the Proton donor in the catalytic mechanism. The active site involves E114.

Belongs to the GCKR-like family. MurNAc-6-P etherase subfamily. Homodimer.

It carries out the reaction N-acetyl-D-muramate 6-phosphate + H2O = N-acetyl-D-glucosamine 6-phosphate + (R)-lactate. Its pathway is amino-sugar metabolism; 1,6-anhydro-N-acetylmuramate degradation. It functions in the pathway amino-sugar metabolism; N-acetylmuramate degradation. The protein operates within cell wall biogenesis; peptidoglycan recycling. Specifically catalyzes the cleavage of the D-lactyl ether substituent of MurNAc 6-phosphate, producing GlcNAc 6-phosphate and D-lactate. Together with AnmK, is also required for the utilization of anhydro-N-acetylmuramic acid (anhMurNAc) either imported from the medium or derived from its own cell wall murein, and thus plays a role in cell wall recycling. The chain is N-acetylmuramic acid 6-phosphate etherase from Shigella boydii serotype 18 (strain CDC 3083-94 / BS512).